The following is an 807-amino-acid chain: MFSAGAESLLHQAREIQDEELKKFCSRICKLLQAEDLGPDTLDSLQRLFLIISATKYSRRLEKTCVDLLQATLGLPACPEQLQVLCAAILREMSPSDSLSLAWDHTQNSRQLSLVASVLLAQGDRNEEVRAVGQGVLRALESRQPEGPSLRHLLPVMAKVVVLSPGTLQEDQATLLSKRLVDWLRYASLQQGLPHSGGFFSTPRARQPGPVTEVDGAVATDFFTVLSSGHRFTDDQWLNVQAFSMLRAWLLHSGPEGPGTLDTDDRSEQEGSTLSVISATSSAGRLLPPRERLREVAFEYCQRLIEQSNRRALRKGDSDLQKACLVEAVLVLDVLCRQDPSFLYRSLSCLKALHGRVRGDPASVRVLLPLAHFFLSHGEAAAVDSEAVYQHLFTRIPVEQFHSPMLAFEFIQFCRDNLHLFSGHLSTLRLSFPNLFKFLAWNSPPLTSEFVALLPALVDAGTALEMLHALLDLPCLTAVLDLQLRSAPAASERPLWDTSLRAPSCLEAFRDPQFQGLFQYLLRPKASGATERLAPLHQLLQPMAGCARVAQCAQAVPTLLQAFFSAVTQVADGSLINQLALLLLGRSDSLYPAPGYAAGVHSVLSSQFLALCTLKPSLVVELARDLLEFLGSVNGLCSRASLVTSVVWAIGEYLSVTYDRRCTVEQINKFFEALEALLFEVTQCRPSAALPRCPPQVVTVLMTTLTKLASRSQDLIPRASLLLSKMRTLAHSPATSSTHSEEGAEAIRTRATELLTLLKMPSVAQFVLTPSTEVCSPRYHRDANTALPLALRTVSRLVEREAGLMPG.

Probably part of the adaptor protein complex 5 (AP-5) a tetramer composed of AP5B1, AP5M1, AP5S1 and AP5Z1. Interacts with ZFYVE26 and SPG11.

The protein localises to the cytoplasm. The protein resides in the nucleus. Functionally, as part of AP-5, a probable fifth adaptor protein complex it may be involved in endosomal transport. According to PubMed:20613862 it is a putative helicase required for efficient homologous recombination DNA double-strand break repair. This chain is AP-5 complex subunit zeta-1 (AP5Z1), found in Homo sapiens (Human).